A 362-amino-acid polypeptide reads, in one-letter code: Lipoprotein p35 (362 aa).

Positions Met1–Ser30 are cleaved as a signal peptide. A lipid anchor (N-palmitoyl cysteine) is attached at Cys31. Cys31 carries the S-diacylglycerol cysteine lipid modification. The interval Ser33–Gln53 is disordered.

Belongs to the p35 lipoprotein family. The N-terminus is blocked.

The protein localises to the cell membrane. Its function is as follows. Major M.penetrans antigen. This is Lipoprotein p35 from Malacoplasma penetrans (Mycoplasma penetrans).